The sequence spans 886 residues: Alanine--tRNA ligase (886 aa).

His564, His568, Cys666, and His670 together coordinate Zn(2+).

The protein belongs to the class-II aminoacyl-tRNA synthetase family. Zn(2+) serves as cofactor.

It is found in the cytoplasm. The catalysed reaction is tRNA(Ala) + L-alanine + ATP = L-alanyl-tRNA(Ala) + AMP + diphosphate. Catalyzes the attachment of alanine to tRNA(Ala) in a two-step reaction: alanine is first activated by ATP to form Ala-AMP and then transferred to the acceptor end of tRNA(Ala). Also edits incorrectly charged Ser-tRNA(Ala) and Gly-tRNA(Ala) via its editing domain. The sequence is that of Alanine--tRNA ligase from Prochlorococcus marinus (strain MIT 9301).